The chain runs to 1068 residues: MSVILNASVNTKSAVEYRTISSTQSHLAEEQSERLHKWISKDQLEKLHAAFLNTPERHVGIDELRIILEELDITFNDSMYTRLFLKINQNRDFKVDWNEFVSYLIFGFQEEDPSSQKESLILPISGPPMVRKSEHRSAICCLALLKAKSDQVPIDEVTETINFSFGGEDSPEASGMWVTASHEGMMRFWTSHMEPIRTASSESIVSTYAFYNNGKVHSKLILGDYAGNVRILSYSPHLRGPFQAKPGAALIEVIWSDVLKGKIPQFFPKEYINLHNEMISCVYFSLHMNALFASAEYRNTKKYRGRCPGMIMVNYDERSNFRIPLGVSTFFVAESHNIVVTGGPDTFVRIWDVYIPTEPSAILTGHNGGIVLVFVQPEENKVYSVDYQKIIKVWDLHEHTLLQTYGDLVRLIHHSETDMTYYYHSHLQELVVAGRKLISIKCCPRVRVDLADGNTHAAPVSVVLYNRLFRNVVSCGLDSYIIVWDPWTGRRKIIMKSCHTKMIYGEIIDIEITAACFDPLEQFLLTGARDGSLKIWNYNNAVVVRNMSIMPDQEVTAVIWVVDRILPMGWDWQVTEFNDVVGREYGDPKKWPKFHTDDITCADVKLGEGVVTATYSGEIIFWKLETGQPYRRYSVMDPTRFIELKLTAEEEKFIRQSKRLASRPTPGNHGLQMGRAGRSTVLNRPEDNRDYGTDIPISVQAVLFLQTRPQTLKHGSVFISLDTGFIQVYSHHQRGGYMVEFLAVHKTGDCVLTMCTDRKNRYLYTGTAFGYIKVWHIENFCVPETEKIHVCMPKLRLEFIFLRKELFLTRAKRAVRNQAEPLLVSSYKGHLKAINSISFINLPKIIFTGSHDYSCRLWTQGGRYLGTLGTVLPWSKLTPFERAGNDNHLYRMPPDIKKVASSTTLKVISGIQAETRIKISDGKPVEDREEDTAQTEDVTELRKLLDKPVKEPILGKHFELPGRSVLDQHIELDTTQSYIAVFTQLKVHSTEMLERLPTPAVVSRVQTENYLDHYIPVEGKVDVSGSAINIKQPSRRRSDKTNDTRNVRTPRARDLIALEMSSSHASQS.

WD repeat units lie at residues 155 to 199 (DEVT…IRTA), 201 to 242 (SESI…RGPF), 322 to 361 (RIPLGVSTFFVAESHNIVVTGGPDTFVRIWDVYIPTEPSA), 365 to 404 (GHNGGIVLVFVQPEENKVYSVDYQKIIKVWDLHEHTLLQT), 455 to 494 (THAAPVSVVLYNRLFRNVVSCGLDSYIIVWDPWTGRRKII), 507 to 546 (IIDIEITAACFDPLEQFLLTGARDGSLKIWNYNNAVVVRN), and 594 to 634 (FHTD…RRYS). The interval 657 to 687 (SKRLASRPTPGNHGLQMGRAGRSTVLNRPED) is disordered. WD repeat units follow at residues 746 to 785 (KTGDCVLTMCTDRKNRYLYTGTAFGYIKVWHIENFCVPET) and 829 to 868 (GHLKAINSISFINLPKIIFTGSHDYSCRLWTQGGRYLGTL). The tract at residues 1026 to 1068 (SAINIKQPSRRRSDKTNDTRNVRTPRARDLIALEMSSSHASQS) is disordered. The span at 1039–1056 (DKTNDTRNVRTPRARDLI) shows a compositional bias: basic and acidic residues.

The polypeptide is WD repeat-containing protein on Y chromosome (Drosophila yakuba (Fruit fly)).